The following is a 789-amino-acid chain: Trans-4-hydroxy-L-proline dehydratase (789 aa).

The region spanning 7-663 (ERTKKLREES…IMGASPNGRL (657 aa)) is the PFL domain. The Cysteine radical intermediate role is filled by C434. E436 (proton acceptor) is an active-site residue. The Glycine radical domain maps to 670–789 (EGISPEKGGD…EIIGRTEQTF (120 aa)). G765 is subject to Glycine radical.

The protein belongs to the glycyl radical enzyme (GRE) family. HYPD subfamily. Post-translationally, requires the activating protein PflE to generate the key active site glycyl radical on Gly-765 that is involved in catalysis.

It carries out the reaction trans-4-hydroxy-L-proline = (S)-1-pyrroline-5-carboxylate + H2O + H(+). Functionally, glycine radical enzyme that catalyzes the dehydration of the non-proteinogenic amino acid trans-4-hydroxy-L-proline (Hyp) to produce delta(1)-pyrroline-5-carboxylate (P5C). Is involved in the anaerobic degradation of 4-hydroxyproline. The sequence is that of Trans-4-hydroxy-L-proline dehydratase from Clostridioides difficile (Peptoclostridium difficile).